The sequence spans 60 residues: Cytotoxin 10 (60 aa).

Cystine bridges form between cysteine 3/cysteine 21, cysteine 14/cysteine 38, cysteine 42/cysteine 53, and cysteine 54/cysteine 59.

This sequence belongs to the three-finger toxin family. Short-chain subfamily. Type IA cytotoxin sub-subfamily. Monomer in solution; Homodimer and oligomer in the presence of negatively charged lipids forming a pore with a size ranging between 20 and 30 Angstroms. As to expression, expressed by the venom gland.

It is found in the secreted. Its subcellular location is the target cell membrane. Shows cytolytic activity on many different cells by forming pore in lipid membranes. In vivo, increases heart rate or kills the animal by cardiac arrest. In addition, it binds to heparin with high affinity, interacts with Kv channel-interacting protein 1 (KCNIP1) in a calcium-independent manner, and binds to integrin alpha-V/beta-3 (ITGAV/ITGB3) with moderate affinity. This Naja annulifera (Banded Egyptian cobra) protein is Cytotoxin 10.